Reading from the N-terminus, the 421-residue chain is Acyl-coenzyme A thioesterase 6 (421 aa).

Residues serine 232, aspartate 326, and histidine 360 each act as charge relay system in the active site. Positions 419 to 421 (SKI) match the Peroxisome targeting signal motif.

This sequence belongs to the C/M/P thioester hydrolase family.

It localises to the peroxisome. Its subcellular location is the cytoplasm. The catalysed reaction is pristanoyl-CoA + H2O = 2,6,10,14-tetramethylpentadecanoate + CoA + H(+). It catalyses the reaction phytanoyl-CoA + H2O = 3,7,11,15-tetramethylhexadecanoate + CoA + H(+). It participates in lipid metabolism; fatty acid metabolism. Functionally, catalyzes the hydrolysis of acyl-CoAs into free fatty acids and coenzyme A (CoASH), regulating their respective intracellular levels. Catalyzes the hydrolysis of phytanoyl-CoA and pristanoyl-CoA, two methyl-branched fatty acids derived from phytol, that enter the body via the diet. The sequence is that of Acyl-coenzyme A thioesterase 6 from Homo sapiens (Human).